Reading from the N-terminus, the 311-residue chain is Putative protease MJ0651 (311 aa).

Ser128 (nucleophile) is an active-site residue. Lys180 (proton donor/acceptor) is an active-site residue.

It belongs to the peptidase S49 family.

The protein is Putative protease MJ0651 of Methanocaldococcus jannaschii (strain ATCC 43067 / DSM 2661 / JAL-1 / JCM 10045 / NBRC 100440) (Methanococcus jannaschii).